The primary structure comprises 259 residues: Type III pantothenate kinase (259 aa).

6-13 (DVGNTNCT) is an ATP binding site. 107–110 (GSDR) is a binding site for substrate. Residue D109 is the Proton acceptor of the active site. D129 provides a ligand contact to K(+). ATP is bound at residue T132. T184 lines the substrate pocket.

This sequence belongs to the type III pantothenate kinase family. As to quaternary structure, homodimer. It depends on NH4(+) as a cofactor. K(+) is required as a cofactor.

The protein resides in the cytoplasm. The catalysed reaction is (R)-pantothenate + ATP = (R)-4'-phosphopantothenate + ADP + H(+). Its pathway is cofactor biosynthesis; coenzyme A biosynthesis; CoA from (R)-pantothenate: step 1/5. Functionally, catalyzes the phosphorylation of pantothenate (Pan), the first step in CoA biosynthesis. The polypeptide is Type III pantothenate kinase (Listeria welshimeri serovar 6b (strain ATCC 35897 / DSM 20650 / CCUG 15529 / CIP 8149 / NCTC 11857 / SLCC 5334 / V8)).